Here is a 119-residue protein sequence, read N- to C-terminus: Large ribosomal subunit protein uL18 (119 aa).

This sequence belongs to the universal ribosomal protein uL18 family. In terms of assembly, part of the 50S ribosomal subunit; part of the 5S rRNA/L5/L18/L25 subcomplex. Contacts the 5S and 23S rRNAs.

Functionally, this is one of the proteins that bind and probably mediate the attachment of the 5S RNA into the large ribosomal subunit, where it forms part of the central protuberance. In Nitratidesulfovibrio vulgaris (strain DSM 19637 / Miyazaki F) (Desulfovibrio vulgaris), this protein is Large ribosomal subunit protein uL18.